The chain runs to 266 residues: Ribosomal RNA small subunit methyltransferase A (266 aa).

Residues Asn12, Leu14, Gly39, Glu61, Asp87, and Asn107 each contribute to the S-adenosyl-L-methionine site.

Belongs to the class I-like SAM-binding methyltransferase superfamily. rRNA adenine N(6)-methyltransferase family. RsmA subfamily.

It localises to the cytoplasm. It carries out the reaction adenosine(1518)/adenosine(1519) in 16S rRNA + 4 S-adenosyl-L-methionine = N(6)-dimethyladenosine(1518)/N(6)-dimethyladenosine(1519) in 16S rRNA + 4 S-adenosyl-L-homocysteine + 4 H(+). In terms of biological role, specifically dimethylates two adjacent adenosines (A1518 and A1519) in the loop of a conserved hairpin near the 3'-end of 16S rRNA in the 30S particle. May play a critical role in biogenesis of 30S subunits. The sequence is that of Ribosomal RNA small subunit methyltransferase A from Nitratidesulfovibrio vulgaris (strain DP4) (Desulfovibrio vulgaris).